A 440-amino-acid chain; its full sequence is Protein disulfide-isomerase A6 homolog (440 aa).

Residues 1 to 18 (MALIKLLLASLAITSVCG) form the signal peptide. Thioredoxin domains are found at residues 19-131 (MYSK…AEAK) and 127-273 (LAEA…ARAQ). Active-site nucleophile residues include C54 and C57. An intrachain disulfide couples C54 to C57. Residues 138 to 164 (LGGKSSGSSSSGSGSGSGKRGGGGSGN) form a disordered region. Over residues 139 to 149 (GGKSSGSSSSG) the composition is skewed to low complexity. Residues 150-163 (SGSGSGKRGGGGSG) show a composition bias toward gly residues. Catalysis depends on nucleophile residues C194 and C197. C194 and C197 are joined by a disulfide. A disordered region spans residues 404–426 (DGFPKIQKTEKWDGKDGALPAED). Residues 410–419 (QKTEKWDGKD) are compositionally biased toward basic and acidic residues. A Prevents secretion from ER motif is present at residues 437 to 440 (KTEL).

This sequence belongs to the protein disulfide isomerase family.

It is found in the endoplasmic reticulum lumen. The enzyme catalyses Catalyzes the rearrangement of -S-S- bonds in proteins.. Its function is as follows. May function as a chaperone that inhibits aggregation of misfolded proteins. May negatively regulate the unfolded protein response (UPR) through binding to UPR sensors. This is Protein disulfide-isomerase A6 homolog from Caenorhabditis elegans.